The following is a 1339-amino-acid chain: Receptor tyrosine-protein kinase erbB-3 (1339 aa).

The N-terminal stretch at 1 to 19 (MRATGTLQVLCFLLSLARG) is a signal peptide. Over 20–643 (SEMGNSQAVC…EVLMSKPHLV (624 aa)) the chain is Extracellular. The N-linked (GlcNAc...) asparagine glycan is linked to asparagine 126. 11 disulfide bridges follow: cysteine 186/cysteine 194, cysteine 190/cysteine 202, cysteine 210/cysteine 218, cysteine 214/cysteine 226, cysteine 227/cysteine 235, cysteine 231/cysteine 243, cysteine 246/cysteine 255, cysteine 259/cysteine 286, cysteine 290/cysteine 301, cysteine 305/cysteine 320, and cysteine 323/cysteine 327. A glycan (N-linked (GlcNAc...) asparagine) is linked at asparagine 250. Residues asparagine 353, asparagine 408, asparagine 414, asparagine 437, and asparagine 469 are each glycosylated (N-linked (GlcNAc...) asparagine). Intrachain disulfides connect cysteine 500/cysteine 509, cysteine 504/cysteine 517, cysteine 520/cysteine 529, cysteine 533/cysteine 549, cysteine 552/cysteine 565, cysteine 556/cysteine 573, cysteine 576/cysteine 585, cysteine 589/cysteine 610, cysteine 613/cysteine 621, and cysteine 617/cysteine 629. Residue asparagine 522 is glycosylated (N-linked (GlcNAc...) asparagine). A glycan (N-linked (GlcNAc...) asparagine) is linked at asparagine 566. Asparagine 616 carries N-linked (GlcNAc...) asparagine glycosylation. The chain crosses the membrane as a helical span at residues 644 to 662 (IAVTVGLAVILMILGGSFL). Topologically, residues 663–1339 (YWRGRRIQNK…LFPKANAQRT (677 aa)) are cytoplasmic. The residue at position 684 (serine 684) is a Phosphoserine. Residues 707–964 (LRKLKVLGSG…TFKELANEFT (258 aa)) form the Protein kinase domain. ATP is bound by residues 713-721 (LGSGVFGTV), lysine 740, 786-788 (QYL), and 832-837 (DLALRN). Catalysis depends on aspartate 832, which acts as the Proton acceptor. At serine 980 the chain carries Phosphoserine. The segment covering 1023–1036 (SLGSALSLPTGTLT) has biased composition (low complexity). Disordered stretches follow at residues 1023-1052 (SLGS…SGYM) and 1078-1215 (PISL…GSLE). A compositionally biased stretch (polar residues) spans 1039 to 1052 (RGSQSLLSPSSGYM). Residues 1172–1184 (GTLSSVGLSSVLG) are compositionally biased toward low complexity. Residues 1185 to 1195 (TEEEDEDEEYE) show a composition bias toward acidic residues.

This sequence belongs to the protein kinase superfamily. Tyr protein kinase family. EGF receptor subfamily. As to quaternary structure, monomer and homodimer. Heterodimer with each of the other ERBB receptors (Potential). Interacts with CSPG5, PA2G4, GRB7, MYOC and MUC1. Found in a ternary complex with NRG1 and ITGAV:ITGB3 or ITGA6:ITGB4. In terms of processing, autophosphorylated. Ligand-binding increases phosphorylation on tyrosine residues and promotes its association with the p85 subunit of phosphatidylinositol 3-kinase.

It is found in the membrane. It catalyses the reaction L-tyrosyl-[protein] + ATP = O-phospho-L-tyrosyl-[protein] + ADP + H(+). In terms of biological role, tyrosine-protein kinase that plays an essential role as cell surface receptor for neuregulins. Binds to neuregulin-1 (NRG1) and is activated by it; ligand-binding increases phosphorylation on tyrosine residues and promotes its association with the p85 subunit of phosphatidylinositol 3-kinase. May also be activated by CSPG5. Involved in the regulation of myeloid cell differentiation. The protein is Receptor tyrosine-protein kinase erbB-3 (Erbb3) of Rattus norvegicus (Rat).